The primary structure comprises 383 residues: Lipid-A-disaccharide synthase (383 aa).

It belongs to the LpxB family.

It catalyses the reaction a lipid X + a UDP-2-N,3-O-bis[(3R)-3-hydroxyacyl]-alpha-D-glucosamine = a lipid A disaccharide + UDP + H(+). It functions in the pathway bacterial outer membrane biogenesis; LPS lipid A biosynthesis. Condensation of UDP-2,3-diacylglucosamine and 2,3-diacylglucosamine-1-phosphate to form lipid A disaccharide, a precursor of lipid A, a phosphorylated glycolipid that anchors the lipopolysaccharide to the outer membrane of the cell. The protein is Lipid-A-disaccharide synthase of Alcanivorax borkumensis (strain ATCC 700651 / DSM 11573 / NCIMB 13689 / SK2).